The primary structure comprises 194 residues: Large ribosomal subunit protein eL15 (194 aa).

The tract at residues 164-194 (SAGKKGRGLRNKGKGAEKVRPSVRANKGKTK) is disordered. Positions 167 to 176 (KKGRGLRNKG) are enriched in basic residues.

It belongs to the eukaryotic ribosomal protein eL15 family.

In Thermococcus gammatolerans (strain DSM 15229 / JCM 11827 / EJ3), this protein is Large ribosomal subunit protein eL15.